A 476-amino-acid polypeptide reads, in one-letter code: mRNA cap guanine-N(7) methyltransferase (476 aa).

A compositionally biased stretch (basic and acidic residues) spans methionine 1–serine 14. The disordered stretch occupies residues methionine 1 to lysine 128. The span at alanine 20–cysteine 50 shows a compositional bias: polar residues. Serine 24, serine 28, and serine 29 each carry phosphoserine. Composition is skewed to basic and acidic residues over residues aspartate 54 to lysine 68, leucine 84 to lysine 93, and arginine 107 to tyrosine 117. Serine 118 carries the phosphoserine modification. A Nuclear localization signal motif is present at residues lysine 126–lysine 128. An mRNA cap 0 methyltransferase domain is found at serine 167–glutamine 475. Asparagine 176 to asparagine 177 is an mRNA binding site. S-adenosyl-L-methionine-binding residues include lysine 180, glycine 205, aspartate 227, aspartate 261, glutamine 284, and tyrosine 289.

It belongs to the class I-like SAM-binding methyltransferase superfamily. mRNA cap 0 methyltransferase family. In terms of assembly, interacts with importin alpha, leading to stimulate both RNA-binding and methyltransferase activity. Interaction with importin alpha and beta is required for its nuclear localization, importin beta dissociating in response to RanGTP, allowing RNMT-importin alpha to bind RNA substrates. Interacts with elongating form of polymerase II and RNGTT. Interacts with RAMAC, this interaction significantly enhances RNA-binding and cap methyltransferase activity.

It localises to the nucleus. The catalysed reaction is a 5'-end (5'-triphosphoguanosine)-ribonucleoside in mRNA + S-adenosyl-L-methionine = a 5'-end (N(7)-methyl 5'-triphosphoguanosine)-ribonucleoside in mRNA + S-adenosyl-L-homocysteine. With respect to regulation, methyltransferase activity is activated by RAMAC. Functionally, catalytic subunit of the mRNA-capping methyltransferase RNMT:RAMAC complex that methylates the N7 position of the added guanosine to the 5'-cap structure of mRNAs. Binds RNA containing 5'-terminal GpppC. The polypeptide is mRNA cap guanine-N(7) methyltransferase (RNMT) (Macaca fascicularis (Crab-eating macaque)).